The primary structure comprises 280 residues: Protease HtpX (280 aa).

2 helical membrane passes run 7–26 (TFIL…GLLG) and 30–49 (GMLI…YWYS). His129 provides a ligand contact to Zn(2+). Residue Glu130 is part of the active site. Residue His133 participates in Zn(2+) binding. 2 consecutive transmembrane segments (helical) span residues 146-166 (ATIA…SMFG) and 178-198 (VVGM…QMAI). Glu203 lines the Zn(2+) pocket.

Belongs to the peptidase M48B family. Zn(2+) is required as a cofactor.

The protein localises to the cell inner membrane. This is Protease HtpX from Legionella pneumophila subsp. pneumophila (strain Philadelphia 1 / ATCC 33152 / DSM 7513).